The following is a 440-amino-acid chain: Oligodendrocyte-myelin glycoprotein (440 aa).

The signal sequence occupies residues 1-24; sequence MEYQILKMSLCLFILLFLTPGILC. Residues 25–55 enclose the LRRNT domain; the sequence is ICPLQCICTERHRHVDCSGRNLSTLPSGLQE. 2 N-linked (GlcNAc...) asparagine glycosylation sites follow: N45 and N61. LRR repeat units lie at residues 56–77, 79–100, 101–121, 124–145, 147–168, 169–189, 192–213, and 216–239; these read NIIH…LTQY, NLRT…LPRS, LWNM…DTAY, NLKY…KNTL, SLEV…MPSK, LHIV…TLIN, NLTH…SFDQ, and QLQE…TYLL. N-linked (GlcNAc...) asparagine glycosylation is present at N103. Residues N152, N176, N189, N192, and N234 are each glycosylated (N-linked (GlcNAc...) asparagine). Ser/Thr-rich repeat units follow at residues 229 to 270, 271 to 292, 293 to 335, 336 to 377, and 378 to 416; these read CDHK…YPTP, SGFT…INSL, SVVT…VPYP, EDTS…SPTP, and MTLS…TPLP. N-linked (GlcNAc...) asparagine glycosylation is found at N364 and N389. S417 is lipidated: GPI-anchor amidated serine. Positions 418–440 are cleaved as a propeptide — removed in mature form; sequence VANAWKVNASFLLLLNVVVMLAV. N425 carries an N-linked (GlcNAc...) asparagine glycan.

In terms of assembly, binds to RTN4R. O-glycosylated in its Ser/Thr-rich repeat domain. In terms of tissue distribution, oligodendrocytes and myelin of the central nervous system.

It localises to the cell membrane. Cell adhesion molecule contributing to the interactive process required for myelination in the central nervous system. The sequence is that of Oligodendrocyte-myelin glycoprotein (OMG) from Homo sapiens (Human).